We begin with the raw amino-acid sequence, 545 residues long: Sulfite oxidase, mitochondrial (545 aa).

A mitochondrion-targeting transit peptide spans 1 to 79 (MLLLHRAVVL…YQDHRCRAAQ (79 aa)). Positions 82 to 161 (THIYTKEEVS…LAQYKIGELN (80 aa)) constitute a Cytochrome b5 heme-binding domain. Residue His118 coordinates heme b. The residue at position 123 (Ser123) is a Phosphoserine. The heme b site is built by His143, Gln145, and His147. Positions 165-174 (KVAPTVETSD) are hinge. The moco domain stretch occupies residues 175–401 (PYADDPVRHP…YSHWQRRDYK (227 aa)). Mo-molybdopterin is bound by residues 215–219 (FTRNH), Cys264, Asp322, His361, Arg366, and 377–379 (HVK). The segment at 402–538 (GFSPSVDWET…RGVLSNAWHR (137 aa)) is homodimerization.

As to quaternary structure, homodimer. The cofactor is heme b. Mo-molybdopterin is required as a cofactor.

The protein resides in the mitochondrion intermembrane space. It catalyses the reaction sulfite + O2 + H2O = sulfate + H2O2. Its pathway is energy metabolism; sulfur metabolism. Its function is as follows. Catalyzes the oxidation of sulfite to sulfate, the terminal reaction in the oxidative degradation of sulfur-containing amino acids. This chain is Sulfite oxidase, mitochondrial (SUOX), found in Homo sapiens (Human).